Reading from the N-terminus, the 7763-residue chain is Nonribosomal peptide synthetase agiA (7763 aa).

Positions 20 to 168 (APSVMQEEMI…DGWSARALLE (149 aa)) are condensation 1. Residues 469–866 (EQAASKWPSK…GRADGQIKLR (398 aa)) form an adenylation 1 region. Positions 995-1071 (LPESPAERLL…DVARAMSPSS (77 aa)) constitute a Carrier 1 domain. Ser-1032 is modified (O-(pantetheine 4'-phosphoryl)serine). Residues 1104–1526 (IYPCTPQQEG…GLSDQKLITG (423 aa)) form a condensation 2 region. Positions 1562–1968 (FEMQADMTPQ…GRIDSQIKLR (407 aa)) are adenylation 2. Positions 2090–2166 (WEQGSIEDKI…SQAKCATSHT (77 aa)) constitute a Carrier 2 domain. O-(pantetheine 4'-phosphoryl)serine is present on Ser-2127. The segment at 2212–2556 (DHFNQSVLLD…IMPLVFNYQG (345 aa)) is epimerase (E). Residues 2676–3016 (DIIPCTPMQR…PALVNTLLNF (341 aa)) are condensation 3. Residues 3136 to 3531 (WAAQVPEKVA…GRMDDQIKIR (396 aa)) form an adenylation 3 region. In terms of domain architecture, Carrier 3 spans 3667 to 3743 (GPESPTEIML…ELATILNTSY (77 aa)). At Ser-3704 the chain carries O-(pantetheine 4'-phosphoryl)serine. Positions 3789–4238 (VMPCTPFQEG…ISQSIDALVQ (450 aa)) are condensation 4. Positions 4321–4687 (VGSQQPIIPI…GRFDRQIKIR (367 aa)) are adenylation 4. Residues 4806–4880 (APTTEREKVI…DLARQLESTA (75 aa)) form the Carrier 4 domain. Position 4840 is an O-(pantetheine 4'-phosphoryl)serine (Ser-4840). The segment at 4902–5339 (SFAQGRLWFL…ALLNDLSMHD (438 aa)) is condensation 5. Residues 5361–5765 (FRQEARSHPD…GRRDDQVKIR (405 aa)) are adenylation 5. The segment at 5820-5975 (DAWKNVFDTE…YLSEIVQKLV (156 aa)) is S-adenosyl-L-methionine-dependent N-methyltransferase. A Carrier 5 domain is found at 6306-6381 (EYGSEMERIL…RLADRLLSKQ (76 aa)). Position 6341 is an O-(pantetheine 4'-phosphoryl)serine (Ser-6341). Residues 6378-6399 (LSKQSDSNTEANTSTDGKTQHS) are disordered. Polar residues predominate over residues 6379–6399 (SKQSDSNTEANTSTDGKTQHS). The interval 6424–6883 (MPCTPFQEGV…TVGDAEEAAL (460 aa)) is condensation 6. The interval 6913 to 7327 (RQAMESPCKI…GRMDSQVKLR (415 aa)) is adenylation 6. Residues 7446–7522 (PSPGTLEATL…SQAFRILCDV (77 aa)) form the Carrier 6 domain. The residue at position 7483 (Ser-7483) is an O-(pantetheine 4'-phosphoryl)serine. Residues 7542 to 7638 (TMVLIHPFFG…TGKGSPFSTV (97 aa)) form a thioesterase (TE) region.

This sequence belongs to the NRP synthetase family.

Its function is as follows. Nonribosomal peptide synthetase; part of the gene cluster that mediates the biosynthesis of the aspergillicins A and F, 2 cryptic cyclic hexa-depsipeptides. The hexamodular NRPS agiA catalyzes the condensation of the six amino acid residues including N-Me-L-O-Me-tyrosine, L-proline 1, L-proline 2, D-isoleucine, O-acetyl-threonine, and L-isoleucine. The starting condensation domain (C1) of agiA probably loads acetyl-CoA which is condensed on the N-terminus of threonine by the first module to yield O-acetyl-threonine. The second module then loads L-isoleucine. The epimerase (E) domain on module 2 is probably involved in the formation of the D-isoleucine moiety. Modules 3 and 4 further load 2 successive L-prolines. Module 5 is then involved in the condensation of O-Me-L-tyrosine produced by the O-methyltransferase agiB and the N-methyl transferase (NMeT) domain on module 5 probably catalyzes the N-methylation to yield the N-Me-L-O-Me-tyrosine moiety. The A domain of module 5 loads preferentially O-Me-L-tyrosine, but it can also accept L-phenylalanine, which leads to the production of aspergillicin G. Module 6 then loads the last residue, L-isoleucine. The C-terminal thiolesterase (TE) domain probably cyclizes the peptide using the hydroxy group from threonine to form the cyclic depsipeptide. This Aspergillus flavus (strain ATCC 200026 / FGSC A1120 / IAM 13836 / NRRL 3357 / JCM 12722 / SRRC 167) protein is Nonribosomal peptide synthetase agiA.